Here is a 416-residue protein sequence, read N- to C-terminus: 2-amino-3-ketobutyrate coenzyme A ligase, mitochondrial (416 aa).

The transit peptide at Met1–His18 directs the protein to the mitochondrion. N6-acetyllysine; alternate is present on Lys42. At Lys42 the chain carries N6-succinyllysine; alternate. Cys131 to Phe132 contributes to the pyridoxal 5'-phosphate binding site. His156 provides a ligand contact to substrate. Lys184 bears the N6-acetyllysine; alternate mark. At Lys184 the chain carries N6-succinyllysine; alternate. Residues Ser203, Thr259–Lys262, and Ser292–Asn293 contribute to the pyridoxal 5'-phosphate site. An N6-(pyridoxal phosphate)lysine modification is found at Lys262. Lys323 and Lys365 each carry N6-succinyllysine. Lys380 is modified (N6-acetyllysine; alternate). N6-succinyllysine; alternate is present on Lys380. Residue Arg386 participates in substrate binding.

Belongs to the class-II pyridoxal-phosphate-dependent aminotransferase family. Pyridoxal 5'-phosphate is required as a cofactor.

The protein resides in the mitochondrion. It localises to the nucleus. The catalysed reaction is glycine + acetyl-CoA = (2S)-2-amino-3-oxobutanoate + CoA. It functions in the pathway amino-acid degradation; L-threonine degradation via oxydo-reductase pathway; glycine from L-threonine: step 2/2. Functionally, pyridoxal phosphate (PLP) dependent enzyme, which catalyzes the cleavage of 2-amino-3-oxobutanoate to glycine and acetyl-CoA. Catalyzes the second reaction step on the main metabolic degradation pathway for L-threonine. The sequence is that of 2-amino-3-ketobutyrate coenzyme A ligase, mitochondrial (Gcat) from Mus musculus (Mouse).